The primary structure comprises 224 residues: N-(5'-phosphoribosyl)anthranilate isomerase (224 aa).

Belongs to the TrpF family.

The enzyme catalyses N-(5-phospho-beta-D-ribosyl)anthranilate = 1-(2-carboxyphenylamino)-1-deoxy-D-ribulose 5-phosphate. Its pathway is amino-acid biosynthesis; L-tryptophan biosynthesis; L-tryptophan from chorismate: step 3/5. The protein is N-(5'-phosphoribosyl)anthranilate isomerase (TRP1) of Saccharomyces cerevisiae (strain ATCC 204508 / S288c) (Baker's yeast).